We begin with the raw amino-acid sequence, 589 residues long: MPFKAFDTFKEKILKPGKEGVKNAVGDSLGILQRKIDGTTEEEDNIELNEEGRPVQTSRPSPPLCDCHCCGLPKRYIIAIMSGLGFCISFGIRCNLGVAIVEMVNNSTVYVDGKPEIQTAQFNWDPETVGLIHGSFFWGYIMTQIPGGFISNKFAANRVFGAAIFLTSTLNMFIPSAARVHYGCVMCVRILQGLVEGVTYPACHGMWSKWAPPLERSRLATTSFCGSYAGAVVAMPLAGVLVQYIGWSSVFYIYGMFGIIWYMFWLLQAYECPAAHPTISNEEKTYIETSIGEGANVVSLSKFSTPWKRFFTSLPVYAIIVANFCRSWTFYLLLISQPAYFEEVFGFAISKVGLLSAVPHMVMTIVVPIGGQLADYLRSRQILTTTAVRKIMNCGGFGMEATLLLVVGFSHTKGVAISFLVLAVGFSGFAISGFNVNHLDIAPRYASILMGISNGVGTLSGMVCPLIVGAMTRHKTREEWQNVFLIAALVHYSGVIFYGVFASGEKQEWADPENLSEEKCGIIDQDELAEEIELNHESFASPKKKMSYGATSQNCEVQKKEWKGQRGATLDEEELTSYQNEERNFSTIS.

Topologically, residues 1-76 (MPFKAFDTFK…CHCCGLPKRY (76 aa)) are cytoplasmic. A compositionally biased stretch (acidic residues) spans 40–49 (TEEEDNIELN). The disordered stretch occupies residues 40–61 (TEEEDNIELNEEGRPVQTSRPS). The helical transmembrane segment at 77–97 (IIAIMSGLGFCISFGIRCNLG) threads the bilayer. The Vesicular segment spans residues 98–130 (VAIVEMVNNSTVYVDGKPEIQTAQFNWDPETVG). Asn-106 is a glycosylation site (N-linked (GlcNAc...) asparagine). A helical membrane pass occupies residues 131 to 151 (LIHGSFFWGYIMTQIPGGFIS). Residues 152–153 (NK) are Cytoplasmic-facing. Residues 154–174 (FAANRVFGAAIFLTSTLNMFI) traverse the membrane as a helical segment. The Vesicular portion of the chain corresponds to 175–182 (PSAARVHY). Residues 183 to 203 (GCVMCVRILQGLVEGVTYPAC) traverse the membrane as a helical segment. Over 204-221 (HGMWSKWAPPLERSRLAT) the chain is Cytoplasmic. A helical transmembrane segment spans residues 222–242 (TSFCGSYAGAVVAMPLAGVLV). Over 243-249 (QYIGWSS) the chain is Vesicular. The helical transmembrane segment at 250–270 (VFYIYGMFGIIWYMFWLLQAY) threads the bilayer. Over 271–314 (ECPAAHPTISNEEKTYIETSIGEGANVVSLSKFSTPWKRFFTSL) the chain is Cytoplasmic. Residues 315-335 (PVYAIIVANFCRSWTFYLLLI) form a helical membrane-spanning segment. The Vesicular portion of the chain corresponds to 336–353 (SQPAYFEEVFGFAISKVG). A helical transmembrane segment spans residues 354 to 374 (LLSAVPHMVMTIVVPIGGQLA). At 375-390 (DYLRSRQILTTTAVRK) the chain is on the cytoplasmic side. The helical transmembrane segment at 391–411 (IMNCGGFGMEATLLLVVGFSH) threads the bilayer. Topologically, residues 412 to 413 (TK) are vesicular. Residues 414–434 (GVAISFLVLAVGFSGFAISGF) traverse the membrane as a helical segment. Topologically, residues 435–447 (NVNHLDIAPRYAS) are cytoplasmic. The chain crosses the membrane as a helical span at residues 448–468 (ILMGISNGVGTLSGMVCPLIV). Over 469–481 (GAMTRHKTREEWQ) the chain is Vesicular. Residues 482–502 (NVFLIAALVHYSGVIFYGVFA) form a helical membrane-spanning segment. Residues 503 to 586 (SGEKQEWADP…SYQNEERNFS (84 aa)) are Cytoplasmic-facing. The interval 559–589 (KKEWKGQRGATLDEEELTSYQNEERNFSTIS) is disordered. Residues 580-589 (NEERNFSTIS) show a composition bias toward basic and acidic residues.

This sequence belongs to the major facilitator superfamily. Sodium/anion cotransporter family. VGLUT subfamily. Expressed in amygdala, cerebellum, hippocampus, medulla, spinal cord and thalamus.

It is found in the cytoplasmic vesicle. The protein resides in the secretory vesicle. Its subcellular location is the synaptic vesicle membrane. It localises to the cell membrane. The protein localises to the synapse. It is found in the synaptosome. It catalyses the reaction L-glutamate(out) = L-glutamate(in). It carries out the reaction 3 Na(+)(out) + phosphate(out) = 3 Na(+)(in) + phosphate(in). The enzyme catalyses chloride(in) = chloride(out). The L-glutamate uniporter activity exhibits a biphasic dependence on chloride concentration. Chloride channel activity is allosterically activated by lumenal H(+) and Cl(-) leading to synaptic vesicles acidification. The glutamate transport activity is allosterically activated by lumenal H(+) and Cl(-), preventing non-vesicular L-glutamate release. Multifunctional transporter that transports L-glutamate as well as multiple ions such as chloride, sodium and phosphate. At the synaptic vesicle membrane, mainly functions as an uniporter that mediates the uptake of L-glutamate into synaptic vesicles at presynaptic nerve terminals of excitatory neural cells. The L-glutamate uniporter activity is electrogenic and is driven by the proton electrochemical gradient, mainly by the electrical gradient established by the vacuolar H(+)-ATPase across the synaptic vesicle membrane. In addition, functions as a chloride channel that allows a chloride permeation through the synaptic vesicle membrane that affects the proton electrochemical gradient and promotes synaptic vesicles acidification. At the plasma membrane, following exocytosis, functions as a symporter of Na(+) and phosphate from the extracellular space to the cytoplasm allowing synaptic phosphate homeostasis regulation. The symporter activity is electrogenic. Moreover, operates synergistically with SLC18A3/VACHT under a constant H(+) gradient, thereby allowing striatal vesicular acetylcholine uptake. In Homo sapiens (Human), this protein is Vesicular glutamate transporter 3.